A 99-amino-acid polypeptide reads, in one-letter code: Co-chaperonin GroES (99 aa).

The protein belongs to the GroES chaperonin family. Heptamer of 7 subunits arranged in a ring. Interacts with the chaperonin GroEL.

It is found in the cytoplasm. In terms of biological role, together with the chaperonin GroEL, plays an essential role in assisting protein folding. The GroEL-GroES system forms a nano-cage that allows encapsulation of the non-native substrate proteins and provides a physical environment optimized to promote and accelerate protein folding. GroES binds to the apical surface of the GroEL ring, thereby capping the opening of the GroEL channel. The sequence is that of Co-chaperonin GroES from Corynebacterium glutamicum (strain R).